The chain runs to 264 residues: Thymidylate synthase (264 aa).

Arginine 21 contributes to the dUMP binding site. Histidine 51 contributes to the (6R)-5,10-methylene-5,6,7,8-tetrahydrofolate binding site. Position 126–127 (126–127) interacts with dUMP; that stretch reads RR. The Nucleophile role is filled by cysteine 146. DUMP-binding positions include 166–169, asparagine 177, and 207–209; these read RSVD and HLY. Aspartate 169 contributes to the (6R)-5,10-methylene-5,6,7,8-tetrahydrofolate binding site. Residue alanine 263 coordinates (6R)-5,10-methylene-5,6,7,8-tetrahydrofolate.

The protein belongs to the thymidylate synthase family. Bacterial-type ThyA subfamily. As to quaternary structure, homodimer.

The protein localises to the cytoplasm. It catalyses the reaction dUMP + (6R)-5,10-methylene-5,6,7,8-tetrahydrofolate = 7,8-dihydrofolate + dTMP. It functions in the pathway pyrimidine metabolism; dTTP biosynthesis. Its function is as follows. Catalyzes the reductive methylation of 2'-deoxyuridine-5'-monophosphate (dUMP) to 2'-deoxythymidine-5'-monophosphate (dTMP) while utilizing 5,10-methylenetetrahydrofolate (mTHF) as the methyl donor and reductant in the reaction, yielding dihydrofolate (DHF) as a by-product. This enzymatic reaction provides an intracellular de novo source of dTMP, an essential precursor for DNA biosynthesis. This is Thymidylate synthase from Geobacillus thermodenitrificans (strain NG80-2).